A 290-amino-acid chain; its full sequence is 4-hydroxy-3-methylbut-2-enyl diphosphate reductase (290 aa).

Position 12 (Cys12) interacts with [4Fe-4S] cluster. (2E)-4-hydroxy-3-methylbut-2-enyl diphosphate-binding residues include His50 and His83. Dimethylallyl diphosphate is bound by residues His50 and His83. Isopentenyl diphosphate is bound by residues His50 and His83. A [4Fe-4S] cluster-binding site is contributed by Cys105. A (2E)-4-hydroxy-3-methylbut-2-enyl diphosphate-binding site is contributed by His133. His133 contributes to the dimethylallyl diphosphate binding site. His133 contacts isopentenyl diphosphate. Catalysis depends on Glu135, which acts as the Proton donor. Residue Thr173 participates in (2E)-4-hydroxy-3-methylbut-2-enyl diphosphate binding. Cys202 contacts [4Fe-4S] cluster. Residues Ser230, Asn232, and Ser274 each contribute to the (2E)-4-hydroxy-3-methylbut-2-enyl diphosphate site. 3 residues coordinate dimethylallyl diphosphate: Ser230, Asn232, and Ser274. The isopentenyl diphosphate site is built by Ser230, Asn232, and Ser274.

It belongs to the IspH family. [4Fe-4S] cluster serves as cofactor.

The enzyme catalyses isopentenyl diphosphate + 2 oxidized [2Fe-2S]-[ferredoxin] + H2O = (2E)-4-hydroxy-3-methylbut-2-enyl diphosphate + 2 reduced [2Fe-2S]-[ferredoxin] + 2 H(+). It catalyses the reaction dimethylallyl diphosphate + 2 oxidized [2Fe-2S]-[ferredoxin] + H2O = (2E)-4-hydroxy-3-methylbut-2-enyl diphosphate + 2 reduced [2Fe-2S]-[ferredoxin] + 2 H(+). The protein operates within isoprenoid biosynthesis; dimethylallyl diphosphate biosynthesis; dimethylallyl diphosphate from (2E)-4-hydroxy-3-methylbutenyl diphosphate: step 1/1. It participates in isoprenoid biosynthesis; isopentenyl diphosphate biosynthesis via DXP pathway; isopentenyl diphosphate from 1-deoxy-D-xylulose 5-phosphate: step 6/6. Its function is as follows. Catalyzes the conversion of 1-hydroxy-2-methyl-2-(E)-butenyl 4-diphosphate (HMBPP) into a mixture of isopentenyl diphosphate (IPP) and dimethylallyl diphosphate (DMAPP). Acts in the terminal step of the DOXP/MEP pathway for isoprenoid precursor biosynthesis. The sequence is that of 4-hydroxy-3-methylbut-2-enyl diphosphate reductase from Nitratidesulfovibrio vulgaris (strain DP4) (Desulfovibrio vulgaris).